Consider the following 124-residue polypeptide: Large ribosomal subunit protein bL21 (124 aa).

The protein belongs to the bacterial ribosomal protein bL21 family. In terms of assembly, part of the 50S ribosomal subunit. Contacts protein L20.

Its function is as follows. This protein binds to 23S rRNA in the presence of protein L20. This chain is Large ribosomal subunit protein bL21, found in Synechocystis sp. (strain ATCC 27184 / PCC 6803 / Kazusa).